A 330-amino-acid polypeptide reads, in one-letter code: G-protein coupled receptor 157 (330 aa).

Residues 1-15 lie on the Extracellular side of the membrane; sequence MPSPAPPTELLPWER. A helical membrane pass occupies residues 16–36; that stretch reads AVVLLSCALSALGSGLLVATH. The Cytoplasmic segment spans residues 37-48; it reads ALWPDLRSRARR. A helical membrane pass occupies residues 49–69; sequence LLLFLSLADLLSAASYFYGVL. The Extracellular segment spans residues 70–87; sequence QDFAGTSWDCVLQGALST. Residues 88–108 form a helical membrane-spanning segment; sequence FANTSSFFWTVAIALYLYLSI. Over 109 to 119 the chain is Cytoplasmic; sequence VRTTRGPSTDH. The chain crosses the membrane as a helical span at residues 120–140; the sequence is LIWAFHLISWGVPLAITVAAV. The Extracellular portion of the chain corresponds to 141–166; it reads SLKKIGYDASDVSVGWCWINLEAEDR. Residues 167–187 form a helical membrane-spanning segment; that stretch reads VLWMLLTGKLWEMLAYILLPL. The Cytoplasmic portion of the chain corresponds to 188 to 227; it reads LYLLVRKHINRAHQALSEYRPICEGRQLQRGSSTSTADKK. The helical transmembrane segment at 228 to 248 threads the bilayer; it reads LVLIPLIFICLRVWSTVRFVL. Residues 249–259 are Extracellular-facing; it reads TLCGSPAVQTP. A helical membrane pass occupies residues 260–280; sequence VLVVLHGIGNTFQGGANCIMF. Residues 281-330 are Cytoplasmic-facing; sequence VLCTRAVRTRLFSLCCCCPRPSTQSPPGAPTPPKIGESQESRRTPEVPST. The tract at residues 301-330 is disordered; that stretch reads PSTQSPPGAPTPPKIGESQESRRTPEVPST. The span at 317–330 shows a compositional bias: basic and acidic residues; it reads ESQESRRTPEVPST.

Belongs to the G-protein coupled receptor 2 family. In terms of tissue distribution, expressed in the primary cilia of radial glial progenitors (RGPs) in the developing neocortex.

It is found in the cell projection. The protein resides in the cilium membrane. Orphan receptor that promotes neuronal differentiation of radial glial progenitors (RGPs). The activity of this receptor is mediated by a G(q)-protein that activates a phosphatidylinositol-calcium second messenger. This is G-protein coupled receptor 157 (Gpr157) from Mus musculus (Mouse).